The primary structure comprises 157 residues: UPF0212 protein rrnAC1165 (157 aa).

Residues 105-157 (VLEIEEIPEESDETTEDESSSAESEADADDPPSDQSADESDDVLPEFEELIDE) form a disordered region. Positions 106 to 157 (LEIEEIPEESDETTEDESSSAESEADADDPPSDQSADESDDVLPEFEELIDE) are enriched in acidic residues.

This sequence belongs to the UPF0212 family.

This Haloarcula marismortui (strain ATCC 43049 / DSM 3752 / JCM 8966 / VKM B-1809) (Halobacterium marismortui) protein is UPF0212 protein rrnAC1165.